A 990-amino-acid polypeptide reads, in one-letter code: Insulin-degrading enzyme (990 aa).

Residue His-81 participates in Zn(2+) binding. The active-site Proton acceptor is the Glu-84. Positions 85 and 162 each coordinate Zn(2+).

This sequence belongs to the peptidase M16 family. The cofactor is Zn(2+).

The enzyme catalyses Degradation of insulin, glucagon and other polypeptides. No action on proteins.. Functionally, can cleave insulin and TGF-alpha. This is Insulin-degrading enzyme (Ide) from Drosophila melanogaster (Fruit fly).